A 518-amino-acid chain; its full sequence is ETHYLENE INSENSITIVE 3-like 2 protein (518 aa).

The stretch at 37 to 73 (DDLSSDEEMEIEELEKKIWRDKQRLKRLKEMAKNGLG) forms a coiled coil. Residues 450–518 (FNHPNDLYRP…GQELPTSWIQ (69 aa)) form a disordered region. Polar residues-rich tracts occupy residues 475–484 (PSPSTLNQNL) and 500–518 (GTEN…SWIQ).

It belongs to the EIN3 family. As to quaternary structure, acts as a homodimer to bind the primary ethylene response element.

The protein resides in the nucleus. Probable transcription factor acting as a positive regulator in the ethylene response pathway. Could bind the primary ethylene response element present in the ETHYLENE-RESPONSE-FACTOR1 promoter. This is ETHYLENE INSENSITIVE 3-like 2 protein (EIL2) from Arabidopsis thaliana (Mouse-ear cress).